Consider the following 84-residue polypeptide: Anthracycline acyl carrier protein DauA (84 aa).

One can recognise a Carrier domain in the interval 3–80 (ELSLAELREI…SMLIFVNERL (78 aa)). S40 bears the O-(pantetheine 4'-phosphoryl)serine mark.

It functions in the pathway antibiotic biosynthesis; daunorubicin biosynthesis. The protein operates within antibiotic biosynthesis; carminomycin biosynthesis. Its pathway is antibiotic biosynthesis; rhodomycin biosynthesis. It participates in antibiotic biosynthesis; aclacinomycin biosynthesis. In terms of biological role, involved in the biosynthesis of aklanonate which is an important precursor common to the formation of the clinically significant anthracyclines such as carminomycin, daunorubicin (daunomycin), rhodomycin, aclacinomycin T (aklavin) and aclacinomycin A (aclarubicin). These compounds are aromatic polyketide antibiotics that exhibit high cytotoxicity and are widely applied in the chemotherapy of a variety of cancers. This chain is Anthracycline acyl carrier protein DauA (dauA), found in Streptomyces sp. (strain C5).